Reading from the N-terminus, the 266-residue chain is Putative carbamate hydrolase RutD (266 aa).

The AB hydrolase-1 domain occupies 14-115 (PVVVLISGLG…TMLVSVNGWL (102 aa)).

Belongs to the AB hydrolase superfamily. Hydrolase RutD family.

The enzyme catalyses carbamate + 2 H(+) = NH4(+) + CO2. Its function is as follows. Involved in pyrimidine catabolism. May facilitate the hydrolysis of carbamate, a reaction that can also occur spontaneously. This is Putative carbamate hydrolase RutD from Shigella flexneri serotype 5b (strain 8401).